The chain runs to 142 residues: Hemoglobin subunit alpha-1 (142 aa).

Position 1 is an N-acetylserine (serine 1). The Globin domain maps to 1–142; it reads SLSDKDKAAV…VALALAQRYR (142 aa). Histidine 59 contacts O2. Histidine 88 is a heme b binding site.

Belongs to the globin family. As to quaternary structure, hb1 is a heterotetramer of two alpha-2 chains and two beta chains. As to expression, red blood cells.

Its function is as follows. Involved in oxygen transport from gills to the various peripheral tissues. This chain is Hemoglobin subunit alpha-1 (hba1), found in Notothenia neglecta (Yellowbelly rockcod).